A 271-amino-acid polypeptide reads, in one-letter code: Structure-specific endonuclease subunit slx1 (271 aa).

Positions 5-87 constitute a GIY-YIG domain; the sequence is NFYCCYLLKS…QNLGISRYTK (83 aa). The segment at 180–231 adopts an SLX1-type zinc-finger fold; it reads CNLCYECIESDELRANCPFTDCNSINHLTCLASSFLTEECQVLPIEGMCTKC.

This sequence belongs to the SLX1 family. In terms of assembly, forms a heterodimer with slx4. Mg(2+) is required as a cofactor. The cofactor is Mn(2+).

It is found in the nucleus. It localises to the nucleolus. Functionally, catalytic subunit of the slx1-slx4 structure-specific endonuclease that resolves DNA secondary structures generated during DNA repair and recombination. Has endonuclease activity towards branched DNA substrates, introducing single-strand cuts in duplex DNA close to junctions with ss-DNA. Has a preference for stem-loop (SL) and splayed arm Y structures. Introduces a single-strand cut in duplex DNA on the 3' side of a double-strand/single-strand junction with respect to the single-strand moving 3' to 5' away from the junction. Plays a critical role in maintaining the integrity of the ribosomal DNA (rDNA) loci, where it has a role in re-starting stalled replication forks. The complex initiates homologous recombination (HR) events, used to maintain rDNA copy number, in the rDNA repeats that are processed by a mechanism that requires rad22, but not rhp51. It is also required for suppression of methyl methanesulfonate (MMS) and UV-C irradiation hypersensitivity of the structural maintenance of chromosome (SMC) protein mutant, smc6-74, by overexpression of brc1. Has Holliday junction resolvase activity in vitro. This chain is Structure-specific endonuclease subunit slx1, found in Schizosaccharomyces pombe (strain 972 / ATCC 24843) (Fission yeast).